The primary structure comprises 129 residues: Small ribosomal subunit protein uS11 (129 aa).

The protein belongs to the universal ribosomal protein uS11 family. In terms of assembly, part of the 30S ribosomal subunit. Interacts with proteins S7 and S18. Binds to IF-3.

Functionally, located on the platform of the 30S subunit, it bridges several disparate RNA helices of the 16S rRNA. Forms part of the Shine-Dalgarno cleft in the 70S ribosome. This is Small ribosomal subunit protein uS11 from Salmonella newport (strain SL254).